The following is a 188-amino-acid chain: Pro-FMRFamide-related neuropeptide VF (188 aa).

The first 26 residues, Met1 to Cys26, serve as a signal peptide directing secretion. The propeptide occupies Thr27–Arg57. Position 94 is a phenylalanine amide (Phe94). Residues Thr97–Ala106 constitute a propeptide that is removed on maturation. Disordered regions lie at residues Ser116–Leu144 and Ile163–Lys188. Phe125 is modified (phenylalanine amide). Residues Thr128–Lys188 constitute a propeptide that is removed on maturation.

This sequence belongs to the FARP (FMRFamide related peptide) family.

The protein resides in the secreted. Functionally, efficiently inhibits forskolin-induced production of cAMP. Acts as a potent negative regulator of gonadotropin synthesis and secretion. Induces secretion of prolactin. In terms of biological role, efficiently inhibits forskolin-induced production of cAMP. Blocks morphine-induced analgesia. The sequence is that of Pro-FMRFamide-related neuropeptide VF (Npvf) from Mus musculus (Mouse).